A 225-amino-acid polypeptide reads, in one-letter code: Late embryogenesis abundant protein 29 (225 aa).

Disordered stretches follow at residues 1–167 (MASN…GGFL) and 193–225 (TEEE…YQRK). Basic and acidic residues-rich tracts occupy residues 28–39 (MRDKAEEGRDKT), 49–61 (KAHE…KDKT), 71–83 (KAHE…KEKT), and 93–119 (KAHE…KDKA). 3 LEA 11-mer repeat repeats span residues 53–63 (TAQSAKDKTSQ), 75–85 (TAQSAKEKTSQ), and 97–107 (TTQAAKEKTSQ). Positions 141 to 153 (TKETAQGAAQYTK) are enriched in polar residues. Residues 154 to 163 (ETAEAGRDKT) are compositionally biased toward basic and acidic residues. A compositionally biased stretch (low complexity) spans 205 to 225 (TTTTTATTRTTDPTHQTYQRK).

Belongs to the LEA type 4 family.

It localises to the cytoplasm. Its subcellular location is the cytosol. Involved dehydration tolerance. The chain is Late embryogenesis abundant protein 29 from Arabidopsis thaliana (Mouse-ear cress).